The sequence spans 309 residues: 4-hydroxy-3-methylbut-2-enyl diphosphate reductase (309 aa).

Residue cysteine 12 coordinates [4Fe-4S] cluster. Residues histidine 41 and histidine 74 each contribute to the (2E)-4-hydroxy-3-methylbut-2-enyl diphosphate site. 2 residues coordinate dimethylallyl diphosphate: histidine 41 and histidine 74. The isopentenyl diphosphate site is built by histidine 41 and histidine 74. Cysteine 96 serves as a coordination point for [4Fe-4S] cluster. (2E)-4-hydroxy-3-methylbut-2-enyl diphosphate is bound at residue histidine 124. Position 124 (histidine 124) interacts with dimethylallyl diphosphate. Histidine 124 contacts isopentenyl diphosphate. Glutamate 126 serves as the catalytic Proton donor. Threonine 167 is a binding site for (2E)-4-hydroxy-3-methylbut-2-enyl diphosphate. Residue cysteine 197 coordinates [4Fe-4S] cluster. Positions 225, 226, 227, and 269 each coordinate (2E)-4-hydroxy-3-methylbut-2-enyl diphosphate. Residues serine 225, serine 226, asparagine 227, and serine 269 each contribute to the dimethylallyl diphosphate site. Residues serine 225, serine 226, asparagine 227, and serine 269 each coordinate isopentenyl diphosphate.

It belongs to the IspH family. Requires [4Fe-4S] cluster as cofactor.

The enzyme catalyses isopentenyl diphosphate + 2 oxidized [2Fe-2S]-[ferredoxin] + H2O = (2E)-4-hydroxy-3-methylbut-2-enyl diphosphate + 2 reduced [2Fe-2S]-[ferredoxin] + 2 H(+). The catalysed reaction is dimethylallyl diphosphate + 2 oxidized [2Fe-2S]-[ferredoxin] + H2O = (2E)-4-hydroxy-3-methylbut-2-enyl diphosphate + 2 reduced [2Fe-2S]-[ferredoxin] + 2 H(+). It functions in the pathway isoprenoid biosynthesis; dimethylallyl diphosphate biosynthesis; dimethylallyl diphosphate from (2E)-4-hydroxy-3-methylbutenyl diphosphate: step 1/1. It participates in isoprenoid biosynthesis; isopentenyl diphosphate biosynthesis via DXP pathway; isopentenyl diphosphate from 1-deoxy-D-xylulose 5-phosphate: step 6/6. Functionally, catalyzes the conversion of 1-hydroxy-2-methyl-2-(E)-butenyl 4-diphosphate (HMBPP) into a mixture of isopentenyl diphosphate (IPP) and dimethylallyl diphosphate (DMAPP). Acts in the terminal step of the DOXP/MEP pathway for isoprenoid precursor biosynthesis. This chain is 4-hydroxy-3-methylbut-2-enyl diphosphate reductase, found in Colwellia psychrerythraea (strain 34H / ATCC BAA-681) (Vibrio psychroerythus).